A 360-amino-acid polypeptide reads, in one-letter code: UDP-N-acetylglucosamine--N-acetylmuramyl-(pentapeptide) pyrophosphoryl-undecaprenol N-acetylglucosamine transferase (360 aa).

Residues 15–17 (TGG), Asn124, Arg165, Ser191, and Gln285 each bind UDP-N-acetyl-alpha-D-glucosamine.

Belongs to the glycosyltransferase 28 family. MurG subfamily.

It localises to the cell inner membrane. The catalysed reaction is di-trans,octa-cis-undecaprenyl diphospho-N-acetyl-alpha-D-muramoyl-L-alanyl-D-glutamyl-meso-2,6-diaminopimeloyl-D-alanyl-D-alanine + UDP-N-acetyl-alpha-D-glucosamine = di-trans,octa-cis-undecaprenyl diphospho-[N-acetyl-alpha-D-glucosaminyl-(1-&gt;4)]-N-acetyl-alpha-D-muramoyl-L-alanyl-D-glutamyl-meso-2,6-diaminopimeloyl-D-alanyl-D-alanine + UDP + H(+). It functions in the pathway cell wall biogenesis; peptidoglycan biosynthesis. Cell wall formation. Catalyzes the transfer of a GlcNAc subunit on undecaprenyl-pyrophosphoryl-MurNAc-pentapeptide (lipid intermediate I) to form undecaprenyl-pyrophosphoryl-MurNAc-(pentapeptide)GlcNAc (lipid intermediate II). This is UDP-N-acetylglucosamine--N-acetylmuramyl-(pentapeptide) pyrophosphoryl-undecaprenol N-acetylglucosamine transferase from Gloeothece citriformis (strain PCC 7424) (Cyanothece sp. (strain PCC 7424)).